A 784-amino-acid chain; its full sequence is Kinesin-like protein Klp68D (784 aa).

The 326-residue stretch at 19 to 344 folds into the Kinesin motor domain; that stretch reads CVQVVVRCRP…LRYASRAKSI (326 aa). 106-113 serves as a coordination point for ATP; it reads GQTGTGKT. Residues 351-385 adopt a coiled-coil conformation; the sequence is NEDPQDAKLKEYQEEIERLKRLIGPQQQQRSEKQV. Disordered regions lie at residues 371 to 449, 605 to 652, and 742 to 784; these read RLIG…ERER, KFSS…PSSL, and IKSS…LVNK. The segment covering 386–396 has biased composition (basic residues); the sequence is TAKKQRVKKPK. Over residues 416-428 the composition is skewed to acidic residues; the sequence is PVEDDSDPEGAES. Residues 426 to 582 are a coiled coil; it reads AESESDKENE…KRQLLIIDNF (157 aa). The segment covering 429–449 has biased composition (basic and acidic residues); sequence ESDKENEAEVAKSNEELERER. A compositionally biased stretch (basic residues) spans 622–634; that stretch reads SSKRPVSHPQRRR. Positions 769 to 778 are enriched in low complexity; sequence KKPASAYPKA.

This sequence belongs to the TRAFAC class myosin-kinesin ATPase superfamily. Kinesin family. Kinesin II subfamily. Expressed primarily in the central nervous system and in a subset of the peripheral nervous system during embryogenesis.

The protein resides in the cytoplasm. It is found in the cytoskeleton. Plus-end directed microtubule motor that may be used for anterograde axonal transport and could conceivably move cargos in fly neurons different than those moved by kinesin heavy chain or other plus-end directed motors. The polypeptide is Kinesin-like protein Klp68D (Klp68D) (Drosophila melanogaster (Fruit fly)).